The chain runs to 68 residues: Conotoxin Mi11.1 (68 aa).

The signal sequence occupies residues 1-26 (MMLRLTSVSCFLLVIACLNLFQVVLT). Cystine bridges form between Cys-29–Cys-43, Cys-36–Cys-48, Cys-42–Cys-52, and Cys-47–Cys-56. Tyr-60 is subject to Tyrosine amide. The propeptide occupies 64–68 (ATFQE).

This sequence belongs to the conotoxin I2 superfamily. As to expression, expressed by the venom duct.

It localises to the secreted. The polypeptide is Conotoxin Mi11.1 (Conus miles (Soldier cone)).